Here is a 135-residue protein sequence, read N- to C-terminus: Serine protease inhibitor swm-1 (135 aa).

The N-terminal stretch at 1–16 (MRILVIITCIVAVATA) is a signal peptide. 10 disulfides stabilise this stretch: cysteine 20/cysteine 53, cysteine 29/cysteine 48, cysteine 33/cysteine 44, cysteine 37/cysteine 73, cysteine 55/cysteine 67, cysteine 80/cysteine 114, cysteine 89/cysteine 109, cysteine 93/cysteine 105, cysteine 97/cysteine 133, and cysteine 116/cysteine 127. TIL domains lie at 20–73 (CEAN…VSEC) and 80–133 (CPEN…KKDC). The N-linked (GlcNAc...) asparagine glycan is linked to asparagine 83.

As to expression, in male, expressed in the vas deferens cuboidal cells and, in posterior body wall and male-specific diagonal muscles. In hermaphrodites, expressed in posterior body wall muscles and spermatheca.

Its subcellular location is the secreted. It localises to the cytoplasmic vesicle. It is found in the secretory vesicle lumen. In terms of biological role, serine protease inhibitor. Probably by inhibiting serine protease tyr-5 in males, prevents the maturation of spermatids into mature motile spermatozoa until their transfer into a hermaphrodite. Also required for efficient sperm transfer and thus for male fertility. This is Serine protease inhibitor swm-1 from Caenorhabditis elegans.